A 522-amino-acid polypeptide reads, in one-letter code: Secreted RxLR effector protein 105 (522 aa).

Positions 1–21 are cleaved as a signal peptide; the sequence is MRGPCSVITALLVVASSQIAA. The RxLR-dEER motif lies at 48-63; that stretch reads RYLRGSQHVLDSNEER.

This sequence belongs to the RxLR effector family.

The protein localises to the secreted. Its subcellular location is the host nucleus. It is found in the host cytoplasm. In terms of biological role, secreted effector that dos not suppress the host cell death induced by cell death-inducing proteins. The chain is Secreted RxLR effector protein 105 from Plasmopara viticola (Downy mildew of grapevine).